Here is a 312-residue protein sequence, read N- to C-terminus: tRNA dimethylallyltransferase (312 aa).

15–22 (GPTAAGKS) contacts ATP. 17 to 22 (TAAGKS) contributes to the substrate binding site. The segment at 40-43 (DSMQ) is interaction with substrate tRNA.

This sequence belongs to the IPP transferase family. In terms of assembly, monomer. Mg(2+) serves as cofactor.

The enzyme catalyses adenosine(37) in tRNA + dimethylallyl diphosphate = N(6)-dimethylallyladenosine(37) in tRNA + diphosphate. Functionally, catalyzes the transfer of a dimethylallyl group onto the adenine at position 37 in tRNAs that read codons beginning with uridine, leading to the formation of N6-(dimethylallyl)adenosine (i(6)A). The chain is tRNA dimethylallyltransferase from Streptomyces coelicolor (strain ATCC BAA-471 / A3(2) / M145).